The sequence spans 147 residues: Allograft inflammatory factor 1 (147 aa).

Ser-2 carries the N-acetylserine modification. Lys-11 is modified (N6-acetyllysine). A Phosphoserine modification is found at Ser-39. In terms of domain architecture, EF-hand 1 spans 45 to 80 (SKLEAFKTKYMEFDLNGNGDIDIMSLKRMLEKLGVP). Asp-58, Asn-60, Asn-62, Asp-64, Glu-98, Thr-100, and Asp-105 together coordinate Ca(2+). One can recognise an EF-hand 2; degenerate domain in the interval 81–115 (KTHLELKKLIREVSSGSEETFSYSDFLRMMLGKRS). A disordered region spans residues 127-147 (KNKEHQKPTGPPAKKAISELP).

In terms of assembly, homodimer (Potential). Monomer. Interacts with LCP1. In terms of tissue distribution, cardiac allograft, spleen and testis. Expressed by inflammatory cells (macrophages and neutrophils).

It localises to the cytoplasm. The protein localises to the cytoskeleton. Its subcellular location is the cell projection. It is found in the ruffle membrane. The protein resides in the phagocytic cup. Its function is as follows. Actin-binding protein that enhances membrane ruffling and RAC activation. Enhances the actin-bundling activity of LCP1. Binds calcium. Plays a role in RAC signaling and in phagocytosis. May play an role in macrophage activation and function. Promotes the proliferation of vascular smooth muscle cells and of T-lymphocytes. Enhances lymphocyte migration. Plays a role in vascular inflammation. The chain is Allograft inflammatory factor 1 (Aif1) from Rattus norvegicus (Rat).